The following is a 292-amino-acid chain: MAEVVHGPVADPGAVLALVAEAQAADGIGPLSEQFRLGVAGPGPHVVAEGGYAGIVIPPAGGPGAVEAVVAPSHRGRGLGRELVATALDVAGAGATVWAHGDLTPARAVAARLGLTPVRTLLNLRRPLADLDPAPSAPDGVTVRTYAGPADDTALLAVNNAAFAWHPEQGGWGPEQIAERTGADWFDPAGLFLAIGSGSGSDEADGRLLGFHWTKVADPATGLGEVYVVAVAPEGQGRGLGRLLTSVGLHYLADRKLDTVELYVEGDNAAALHTYTKLGFSEHERHVAYAHS.

N-acetyltransferase domains are found at residues Ala2–Pro138 and Val141–Ser292. Glu33 contacts 1D-myo-inositol 2-(L-cysteinylamino)-2-deoxy-alpha-D-glucopyranoside. Ala68 to Val70 serves as a coordination point for acetyl-CoA. 1D-myo-inositol 2-(L-cysteinylamino)-2-deoxy-alpha-D-glucopyranoside is bound by residues Glu168, Lys215, and Glu225. Acetyl-CoA-binding positions include Val229 to Val231 and Gln236 to Arg242. Tyr263 provides a ligand contact to 1D-myo-inositol 2-(L-cysteinylamino)-2-deoxy-alpha-D-glucopyranoside. Asn268–His273 lines the acetyl-CoA pocket.

This sequence belongs to the acetyltransferase family. MshD subfamily. In terms of assembly, monomer.

The catalysed reaction is 1D-myo-inositol 2-(L-cysteinylamino)-2-deoxy-alpha-D-glucopyranoside + acetyl-CoA = mycothiol + CoA + H(+). Catalyzes the transfer of acetyl from acetyl-CoA to desacetylmycothiol (Cys-GlcN-Ins) to form mycothiol. The protein is Mycothiol acetyltransferase of Tsukamurella paurometabola (strain ATCC 8368 / DSM 20162 / CCUG 35730 / CIP 100753 / JCM 10117 / KCTC 9821 / NBRC 16120 / NCIMB 702349 / NCTC 13040) (Corynebacterium paurometabolum).